The primary structure comprises 274 residues: MGYVVSTFYRFVHLSNYYDIQSVLKEFCVQHDIKGTIILAEQGINATIAGAQSALNQFFSFLDLDNRLKDIQHHESFSTHNPFSKMKVKLRNELVRLGIENFDNSVCGEYVSPQNWDDLISRSDVYTIDTRNTYEINFGKFKNAINPQTKCFRDFPEWAVSWASDKVNQDPIIAMYCTGGIRCEKSTAFMKNLGFNKVYHLKGGILEYFKSTKNTNNLWEGDCFTFDDRIVVDDNLVPGRVKCVSCDVHVTREEMKSVTRGNVLCFNCREVAKV.

A Rhodanese domain is found at 121-217 (SRSDVYTIDT…YFKSTKNTNN (97 aa)). Cys-177 acts as the Cysteine persulfide intermediate in catalysis.

It belongs to the TrhO family.

The catalysed reaction is uridine(34) in tRNA + AH2 + O2 = 5-hydroxyuridine(34) in tRNA + A + H2O. Functionally, catalyzes oxygen-dependent 5-hydroxyuridine (ho5U) modification at position 34 in tRNAs. This is tRNA uridine(34) hydroxylase from Ehrlichia canis (strain Jake).